Here is a 388-residue protein sequence, read N- to C-terminus: Alanine racemase, catabolic (388 aa).

The Proton acceptor; specific for D-alanine role is filled by lysine 46. The residue at position 46 (lysine 46) is an N6-(pyridoxal phosphate)lysine. Residue arginine 145 participates in substrate binding. The Proton acceptor; specific for L-alanine role is filled by tyrosine 267. Methionine 315 contacts substrate.

It belongs to the alanine racemase family. Requires pyridoxal 5'-phosphate as cofactor.

It carries out the reaction L-alanine = D-alanine. In terms of biological role, isomerizes L-alanine to D-alanine which is then oxidized to pyruvate by DadA. This is Alanine racemase, catabolic (dadB) from Agrobacterium fabrum (strain C58 / ATCC 33970) (Agrobacterium tumefaciens (strain C58)).